The chain runs to 213 residues: Adenylate kinase (213 aa).

Residue 10 to 15 participates in ATP binding; sequence GSGKGS. Residues 30–60 are NMP; the sequence is STGNLFRAILKEDSELARKIKEINVSGGKLV. AMP-binding positions include T31, R36, 58 to 60, 87 to 90, and Q94; these read KLV and GYPR. The tract at residues 123-160 is LID; that stretch reads GRWMCPKCAGIYNIHFKKPQVDGVCDNDQATLYQRADD. Position 124 (R124) interacts with ATP. Zn(2+) contacts are provided by C127 and C130. 133-134 is a binding site for ATP; it reads IY. Positions 147 and 150 each coordinate Zn(2+). AMP is bound by residues R157 and R168. Residue Q196 participates in ATP binding.

This sequence belongs to the adenylate kinase family. Monomer.

The protein resides in the cytoplasm. The enzyme catalyses AMP + ATP = 2 ADP. It participates in purine metabolism; AMP biosynthesis via salvage pathway; AMP from ADP: step 1/1. Functionally, catalyzes the reversible transfer of the terminal phosphate group between ATP and AMP. Plays an important role in cellular energy homeostasis and in adenine nucleotide metabolism. This chain is Adenylate kinase, found in Ureaplasma urealyticum serovar 10 (strain ATCC 33699 / Western).